The following is a 633-amino-acid chain: Glutamyl-tRNA(Gln) amidotransferase subunit E (633 aa).

Positions Ala-414 to Asp-437 are disordered.

Belongs to the GatB/GatE family. GatE subfamily. In terms of assembly, heterodimer of GatD and GatE.

It catalyses the reaction L-glutamyl-tRNA(Gln) + L-glutamine + ATP + H2O = L-glutaminyl-tRNA(Gln) + L-glutamate + ADP + phosphate + H(+). Allows the formation of correctly charged Gln-tRNA(Gln) through the transamidation of misacylated Glu-tRNA(Gln) in organisms which lack glutaminyl-tRNA synthetase. The reaction takes place in the presence of glutamine and ATP through an activated gamma-phospho-Glu-tRNA(Gln). The GatDE system is specific for glutamate and does not act on aspartate. The protein is Glutamyl-tRNA(Gln) amidotransferase subunit E of Pyrococcus abyssi (strain GE5 / Orsay).